Here is a 253-residue protein sequence, read N- to C-terminus: ATP synthase subunit a (253 aa).

6 consecutive transmembrane segments (helical) span residues 27 to 47 (ISFTNASGFMLLGVVLVIGFF), 87 to 107 (FFPFVFTLFFFILFANLIGMV), 117 to 137 (IIVTGALAMTVILMVIVVGLI), 146 to 166 (LFAPSGAPLPIYIILTPIEII), 196 to 216 (FTVMLIGAGAIYIPVAALAFA), and 224 to 244 (LEFLVAGLQAYVFAILTCVYL).

The protein belongs to the ATPase A chain family. F-type ATPases have 2 components, CF(1) - the catalytic core - and CF(0) - the membrane proton channel. CF(1) has five subunits: alpha(3), beta(3), gamma(1), delta(1), epsilon(1). CF(0) has three main subunits: a(1), b(2) and c(9-12). The alpha and beta chains form an alternating ring which encloses part of the gamma chain. CF(1) is attached to CF(0) by a central stalk formed by the gamma and epsilon chains, while a peripheral stalk is formed by the delta and b chains.

The protein localises to the cell inner membrane. Key component of the proton channel; it plays a direct role in the translocation of protons across the membrane. The polypeptide is ATP synthase subunit a (Hyphomonas neptunium (strain ATCC 15444)).